The sequence spans 136 residues: Gilles de la Tourette syndrome chromosomal region candidate gene 1 protein (136 aa).

Residues 73 to 93 (AICMEVFLFLWFIAPIYACVC) traverse the membrane as a helical segment.

It is found in the membrane. The protein is Gilles de la Tourette syndrome chromosomal region candidate gene 1 protein (GTSCR1) of Homo sapiens (Human).